The chain runs to 295 residues: Protoheme IX farnesyltransferase (295 aa).

The next 9 helical transmembrane spans lie at I9–A29, F36–F56, L80–L100, L108–L128, G135–S155, L163–F183, I209–A229, G230–K250, and F265–V285.

Belongs to the UbiA prenyltransferase family. Protoheme IX farnesyltransferase subfamily.

The protein resides in the cell inner membrane. It catalyses the reaction heme b + (2E,6E)-farnesyl diphosphate + H2O = Fe(II)-heme o + diphosphate. It functions in the pathway porphyrin-containing compound metabolism; heme O biosynthesis; heme O from protoheme: step 1/1. Its function is as follows. Converts heme B (protoheme IX) to heme O by substitution of the vinyl group on carbon 2 of heme B porphyrin ring with a hydroxyethyl farnesyl side group. This Pseudomonas syringae pv. tomato (strain ATCC BAA-871 / DC3000) protein is Protoheme IX farnesyltransferase.